The primary structure comprises 273 residues: Shikimate dehydrogenase (NADP(+)) (273 aa).

Residues 15-17 and Thr62 contribute to the shikimate site; that span reads SKS. Lys66 serves as the catalytic Proton acceptor. Asp78 serves as a coordination point for NADP(+). Positions 87 and 103 each coordinate shikimate. Residues 127 to 131, 150 to 155, Ala218, and Gly238 each bind NADP(+); these read GAGGA and NRTHTR.

This sequence belongs to the shikimate dehydrogenase family. Homodimer.

It catalyses the reaction shikimate + NADP(+) = 3-dehydroshikimate + NADPH + H(+). It participates in metabolic intermediate biosynthesis; chorismate biosynthesis; chorismate from D-erythrose 4-phosphate and phosphoenolpyruvate: step 4/7. Its function is as follows. Involved in the biosynthesis of the chorismate, which leads to the biosynthesis of aromatic amino acids. Catalyzes the reversible NADPH linked reduction of 3-dehydroshikimate (DHSA) to yield shikimate (SA). The polypeptide is Shikimate dehydrogenase (NADP(+)) (Yersinia pseudotuberculosis serotype O:1b (strain IP 31758)).